The sequence spans 225 residues: Cardiotrophin-like cytokine factor 1 (225 aa).

Positions 1–27 are cleaved as a signal peptide; it reads MDLRAGDSWGMLACLCTVLWHLPAVPA. N29 carries N-linked (GlcNAc...) asparagine glycosylation.

It belongs to the IL-6 superfamily. As to quaternary structure, forms a heteromeric complex with cardiotrophin-like cytokine CRLF1/CLF-1; the CRLF1-CLCF1 complex is a ligand for the ciliary neurotrophic factor receptor/CNTFR. The CRLF1-CLCF1 heterodimer binds SORL1 (via N-terminal ectodomain); within this complex, the interaction is mediated predominantly by the CRLF1 moiety. The tripartite signaling complex formed by CRLF1, CLCF1 and CNTFR also binds SORL1.

It is found in the secreted. Its function is as follows. In complex with CRLF1, forms a heterodimeric neurotropic cytokine that plays a crucial role during neuronal development. Also stimulates B-cells. Binds to and activates the ILST/gp130 receptor. The polypeptide is Cardiotrophin-like cytokine factor 1 (Clcf1) (Mus musculus (Mouse)).